The primary structure comprises 253 residues: CD151 antigen (253 aa).

Residues 1–18 are Cytoplasmic-facing; it reads MGEFNEKKATCGTVCLKY. S-palmitoyl cysteine attachment occurs at residues Cys-11 and Cys-15. Residues 19–39 traverse the membrane as a helical segment; that stretch reads LLFTYNCCFWLAGLAVMAVGI. Over 40–57 the chain is Extracellular; it reads WTLALKSDYISLLASSTY. The helical transmembrane segment at 58 to 78 threads the bilayer; that stretch reads LATAYILVVAGVVVMVTGVLG. Over 79 to 91 the chain is Cytoplasmic; it reads CCATFKERRNLLR. Residues 92–112 traverse the membrane as a helical segment; it reads LYFILLLIIFLLEIIAGILAY. Topologically, residues 113 to 221 are extracellular; the sequence is VYYQQLNTEL…LETFIQEHLR (109 aa). A glycan (N-linked (GlcNAc...) asparagine) is linked at Asn-159. Residues 222-242 form a helical membrane-spanning segment; it reads VIGAVGIGIACVQVFGMIFTC. Residues Cys-242 and Cys-243 are each lipidated (S-palmitoyl cysteine). At 243–253 the chain is on the cytoplasmic side; that stretch reads CLYRSLKLEHY.

It belongs to the tetraspanin (TM4SF) family. Interacts with integrins ITGA3:ITGB1, ITGA5:ITGB1, ITGA3:ITGB1 and ITGA6:ITGB4 and with CD9 and CD181. Interacts (via the second extracellular domain) with integrin ITGAV:ITGB3. Interacts with ITGA3; this interaction modulates ITGA3 glycosylation pattern. Interacts with F11R. Interacts with RAC1 and CDC42; these interactions mediate physical association of RAC1 and CDC42 with integrin adhesion receptor complexes. Palmitoylated. Palmitoylation by ZDHHC2 regulates CD151 expression, association with other tetraspanin family proteins and function in cell adhesion. In terms of processing, ubiquitinated by RNF128 on lysine residues present in the tetraspanin amino terminus via 'Lys-48'-linked ubiquitin leading to proteasomal degradation.

The protein localises to the cell membrane. Its function is as follows. Structural component of specialized membrane microdomains known as tetraspanin-enriched microdomains (TERMs), which act as platforms for receptor clustering and signaling. Plays a role in various cellular and molecular mechanism through its association with both integrin and non-integrin proteins. These interactions facilitate critical cellular functions, including cell-to-cell communication, wound healing, platelet aggregation, trafficking, cell motility, and angiogenesis. Via interaction with JAM-A/F11R and integrin ITGA3:ITGB1, promotes the recruitment of signaling molecules such as RAC1, CDC42 and RhoGTPases to facilitate the polarization of epithelial cells and the reorganization of the actin cytoskeleton, which are critical steps in cell migration process. Regulates the glycosylation pattern of ITGA3:ITGB1 thereby modulating its activity. Plays an essential role in the maintenance of central laminin-binding integrin ITGA6:ITGB4-containing adhesion complexes. Essential for the proper assembly of the glomerular and tubular basement membranes in kidney. Contributes to T-cell activation by modulating integrin signaling leading to activation of downstream targets PTK2 and MAPK1/MAPK3. The sequence is that of CD151 antigen (Cd151) from Mus musculus (Mouse).